The sequence spans 442 residues: Chromosomal replication initiator protein DnaA (442 aa).

A domain I, interacts with DnaA modulators region spans residues 1 to 75; it reads MDAWPRCLER…GNGEVALAVG (75 aa). A domain II region spans residues 75 to 104; it reads GSRPRAPEPLPAPQAVASAPAAAPIVPFAG. Residues 105–322 form a domain III, AAA+ region region; the sequence is NLDSHYTFAN…GALNTLVARA (218 aa). Positions 150, 152, 153, and 154 each coordinate ATP. Positions 323 to 442 are domain IV, binds dsDNA; sequence NFTGRSITVE…WEKLIRKLSE (120 aa).

Belongs to the DnaA family. In terms of assembly, oligomerizes as a right-handed, spiral filament on DNA at oriC.

It is found in the cytoplasm. Plays an essential role in the initiation and regulation of chromosomal replication. ATP-DnaA binds to the origin of replication (oriC) to initiate formation of the DNA replication initiation complex once per cell cycle. Binds the DnaA box (a 9 base pair repeat at the origin) and separates the double-stranded (ds)DNA. Forms a right-handed helical filament on oriC DNA; dsDNA binds to the exterior of the filament while single-stranded (ss)DNA is stabiized in the filament's interior. The ATP-DnaA-oriC complex binds and stabilizes one strand of the AT-rich DNA unwinding element (DUE), permitting loading of DNA polymerase. After initiation quickly degrades to an ADP-DnaA complex that is not apt for DNA replication. Binds acidic phospholipids. This chain is Chromosomal replication initiator protein DnaA, found in Xanthomonas campestris pv. campestris (strain B100).